We begin with the raw amino-acid sequence, 219 residues long: Elongation factor Ts (219 aa).

An involved in Mg(2+) ion dislocation from EF-Tu region spans residues 83–86; the sequence is TDFV.

The protein belongs to the EF-Ts family.

The protein localises to the cytoplasm. Associates with the EF-Tu.GDP complex and induces the exchange of GDP to GTP. It remains bound to the aminoacyl-tRNA.EF-Tu.GTP complex up to the GTP hydrolysis stage on the ribosome. The polypeptide is Elongation factor Ts (Synechococcus sp. (strain WH7803)).